A 302-amino-acid chain; its full sequence is Mitochondrial glycine transporter (302 aa).

Solcar repeat units follow at residues 22–112, 119–203, and 213–297; these read HPVF…LKHH, PKPL…AKKL, and FSPV…MMEK. A run of 6 helical transmembrane segments spans residues 28 to 53, 87 to 113, 125 to 150, 178 to 201, 217 to 243, and 272 to 290; these read FVCG…TRLQ, GVSP…KHHF, VMLG…TRYE, GLTA…TRAK, LNFG…KTHI, and GGLP…AWTV.

It belongs to the mitochondrial carrier (TC 2.A.29) family. SLC25A38 subfamily.

It is found in the mitochondrion inner membrane. The catalysed reaction is glycine(in) = glycine(out). Its function is as follows. Mitochondrial glycine transporter that imports glycine into the mitochondrial matrix. Plays an important role in providing glycine for the first enzymatic step in heme biosynthesis, the condensation of glycine with succinyl-CoA to produce 5-aminolevulinate (ALA) in the mitochondrial matrix. Required during erythropoiesis. In terms of biological role, may play a role as pro-apoptotic protein that induces caspase-dependent apoptosis. This is Mitochondrial glycine transporter from Xenopus tropicalis (Western clawed frog).